A 231-amino-acid chain; its full sequence is Ninja-family protein AFP3 (231 aa).

Residues 83 to 96 (AKRKRSEKQRKHKA) are compositionally biased toward basic residues. The disordered stretch occupies residues 83–152 (AKRKRSEKQR…SAQSQPENLG (70 aa)). Residues 130 to 152 (QATTNKSVETSPSSAQSQPENLG) show a composition bias toward polar residues.

It belongs to the Ninja family. In terms of assembly, forms a heterodimer with AFP2. Interacts with ABI5/DPBF1, DPBF2, AREB3/DPBF3, EEL/DPBF4, ABF1, ABF3/DPBF5 and ABF4/AREB2.

The protein localises to the nucleus. Acts as a negative regulator of abscisic acid (ABA) response and stress responses. In Arabidopsis thaliana (Mouse-ear cress), this protein is Ninja-family protein AFP3 (AFP3).